We begin with the raw amino-acid sequence, 248 residues long: Glucosamine-6-phosphate isomerase (248 aa).

Catalysis depends on Asp68, which acts as the Proton acceptor; for enolization step. Glu137 serves as the catalytic For ring-opening step. His139 serves as the catalytic Proton acceptor; for ring-opening step. The For ring-opening step role is filled by Glu144.

The protein belongs to the glucosamine/galactosamine-6-phosphate isomerase family. In terms of assembly, monomer.

The enzyme catalyses alpha-D-glucosamine 6-phosphate + H2O = beta-D-fructose 6-phosphate + NH4(+). This chain is Glucosamine-6-phosphate isomerase (NAG1), found in Candida albicans (strain SC5314 / ATCC MYA-2876) (Yeast).